The chain runs to 237 residues: Flagellar L-ring protein (237 aa).

Positions 1-16 (MIKRSAVVLMAVILTG) are cleaved as a signal peptide. The N-palmitoyl cysteine moiety is linked to residue Cys-17. Cys-17 carries the S-diacylglycerol cysteine lipid modification. The interval 122 to 143 (PPDSSGDMSTDSNSSSDGKGSV) is disordered. Low complexity predominate over residues 124–140 (DSSGDMSTDSNSSSDGK).

Belongs to the FlgH family. In terms of assembly, the basal body constitutes a major portion of the flagellar organelle and consists of four rings (L,P,S, and M) mounted on a central rod.

It localises to the cell outer membrane. Its subcellular location is the bacterial flagellum basal body. Its function is as follows. Assembles around the rod to form the L-ring and probably protects the motor/basal body from shearing forces during rotation. The protein is Flagellar L-ring protein of Allorhizobium ampelinum (strain ATCC BAA-846 / DSM 112012 / S4) (Agrobacterium vitis (strain S4)).